The primary structure comprises 748 residues: Formate acetyltransferase (748 aa).

A PFL domain is found at 5-618; that stretch reads NNHTNAWQGF…KTGNTPDGRK (614 aa). The active-site S-acetylcysteine intermediate is the Cys412. Cys413 functions as the Cysteine radical intermediate in the catalytic mechanism. The Glycine radical domain maps to 625-748; it reads PGANPMHGRD…VISRTFHESM (124 aa). Gly723 carries the post-translational modification Glycine radical.

The protein belongs to the glycyl radical enzyme (GRE) family. PFL subfamily. In terms of assembly, homodimer.

It localises to the cytoplasm. It carries out the reaction formate + acetyl-CoA = pyruvate + CoA. The protein operates within fermentation; pyruvate fermentation; formate from pyruvate: step 1/1. Its function is as follows. Catalyzes the conversion of pyruvate to formate and acetyl-CoA. This chain is Formate acetyltransferase (pflB), found in Staphylococcus epidermidis (strain ATCC 12228 / FDA PCI 1200).